The primary structure comprises 98 residues: NADH-ubiquinone oxidoreductase chain 4L (98 aa).

The next 3 membrane-spanning stretches (helical) occupy residues 2–22 (PSISINITLAFTAALLGMLMF), 29–49 (SLLCLEGMMLSMFILSTLIIL), and 61–81 (ILLLVFAACEAAIGLALLVMV).

It belongs to the complex I subunit 4L family. Core subunit of respiratory chain NADH dehydrogenase (Complex I) which is composed of 45 different subunits.

It is found in the mitochondrion inner membrane. The enzyme catalyses a ubiquinone + NADH + 5 H(+)(in) = a ubiquinol + NAD(+) + 4 H(+)(out). In terms of biological role, core subunit of the mitochondrial membrane respiratory chain NADH dehydrogenase (Complex I) which catalyzes electron transfer from NADH through the respiratory chain, using ubiquinone as an electron acceptor. Part of the enzyme membrane arm which is embedded in the lipid bilayer and involved in proton translocation. The chain is NADH-ubiquinone oxidoreductase chain 4L (MT-ND4L) from Microcebus griseorufus (Gray-brown mouse lemur).